A 432-amino-acid chain; its full sequence is MEKEISKVSRIKGELRVPSDKSISHRSIILTSLADGVSVVKNFLKAGDTLTTLNVYRKLGVSIIEEKGVLKIKGVNLKGFKEPEDILDMGNSGTTTRLTLGLLSGQEFFSALTGDDSLRQRPMGRVADPLRSMGAKIDGRQDGKLLPLSVRGSSLKGIQFYNKRSSAQVKSALLIAGLLAEGKTKVTEPYISRDHTEKMLDAMGADIHIERDDEYSVTISGSKKLEGIEIDVPADPSSAAFFAAAAVLIPDSELLLKDVLINPTRDGFFRKLKEMGGDIRYTNIREKAKEPVADIYVRYSPDLKGIRIKKEDVPSMVDEIPLLSIVATQAEGETIITGAEELRVKESDRIKAVVENLKNLGIDVEELPDGMVIKGKQKVKGGVVDSYKDHRIAMGFSILGLISEEGIKIKDADSVFISYPEFYEHLERIISN.

Positions 21, 22, and 26 each coordinate 3-phosphoshikimate. Position 21 (Lys-21) interacts with phosphoenolpyruvate. Phosphoenolpyruvate contacts are provided by Gly-93 and Arg-121. 3-phosphoshikimate contacts are provided by Ser-166, Gln-168, Asp-318, and Lys-345. Gln-168 lines the phosphoenolpyruvate pocket. Catalysis depends on Asp-318, which acts as the Proton acceptor. Arg-349 and Arg-391 together coordinate phosphoenolpyruvate.

It belongs to the EPSP synthase family. As to quaternary structure, monomer.

It localises to the cytoplasm. It catalyses the reaction 3-phosphoshikimate + phosphoenolpyruvate = 5-O-(1-carboxyvinyl)-3-phosphoshikimate + phosphate. The protein operates within metabolic intermediate biosynthesis; chorismate biosynthesis; chorismate from D-erythrose 4-phosphate and phosphoenolpyruvate: step 6/7. Catalyzes the transfer of the enolpyruvyl moiety of phosphoenolpyruvate (PEP) to the 5-hydroxyl of shikimate-3-phosphate (S3P) to produce enolpyruvyl shikimate-3-phosphate and inorganic phosphate. This Persephonella marina (strain DSM 14350 / EX-H1) protein is 3-phosphoshikimate 1-carboxyvinyltransferase.